A 158-amino-acid chain; its full sequence is C-type lectin BfL-2 (158 aa).

The first 21 residues, 1 to 21, serve as a signal peptide directing secretion; the sequence is MGHFTFIGLCLLAMFLSLSGA. Intrachain disulfides connect Cys-26–Cys-37, Cys-54–Cys-154, Cys-61–Cys-156, and Cys-129–Cys-146. A C-type lectin domain is found at 33–155; the sequence is KNGLCYKVFS…CETLHPFICQ (123 aa). The Mannose-binding signature appears at 119–121; sequence EPN. Asn-121 carries N-linked (GlcNAc...) asparagine glycosylation. Ca(2+)-binding residues include Glu-127, Asn-142, and Asp-143.

The protein belongs to the true venom lectin family. In terms of assembly, homodimer; non-covalently linked. As to expression, expressed by the venom gland.

The protein resides in the secreted. Its function is as follows. Mannose-binding lectin which recognizes specific carbohydrate structures and agglutinates a variety of animal cells by binding to cell-surface glycoproteins and glycolipids. May be a calcium-dependent lectin. The chain is C-type lectin BfL-2 from Bungarus fasciatus (Banded krait).